The sequence spans 237 residues: Sugar fermentation stimulation protein homolog (237 aa).

Belongs to the SfsA family.

The sequence is that of Sugar fermentation stimulation protein homolog from Pseudomonas savastanoi pv. phaseolicola (strain 1448A / Race 6) (Pseudomonas syringae pv. phaseolicola (strain 1448A / Race 6)).